The chain runs to 539 residues: RING finger protein 37 (539 aa).

The disordered stretch occupies residues 226-249 (PALPMESDCDPGGQSESQHSPCTL). Residues 239–249 (QSESQHSPCTL) show a composition bias toward polar residues. The 81-residue stretch at 258-338 (DVPEEFLDPI…DRFLLQHSIS (81 aa)) folds into the U-box domain. Disordered stretches follow at residues 359 to 399 (LPSR…EPTA) and 456 to 479 (GTRG…VSGP). Residues 374–395 (HYSLGMSASSSATSPLFSPTTS) are compositionally biased toward low complexity. An RING-type zinc finger spans residues 481–526 (CASCKQAFSSYSTNEPVYQLPCGHLLCRPCLSEKQRSQPMMCTACR).

As to quaternary structure, interacts with UBE2L3. Interacts with VCP. In terms of tissue distribution, expressed in testis and placenta.

The protein localises to the nucleus. The catalysed reaction is S-ubiquitinyl-[E2 ubiquitin-conjugating enzyme]-L-cysteine + [acceptor protein]-L-lysine = [E2 ubiquitin-conjugating enzyme]-L-cysteine + N(6)-ubiquitinyl-[acceptor protein]-L-lysine.. Its pathway is protein modification; protein ubiquitination. Functionally, may have a ubiquitin-protein ligase activity acting as an E3 ubiquitin-protein ligase or as a ubiquitin-ubiquitin ligase promoting elongation of ubiquitin chains on substrates. This Mus musculus (Mouse) protein is RING finger protein 37 (Ubox5).